The sequence spans 235 residues: Phosphoribosylaminoimidazole-succinocarboxamide synthase (235 aa).

This sequence belongs to the SAICAR synthetase family.

The catalysed reaction is 5-amino-1-(5-phospho-D-ribosyl)imidazole-4-carboxylate + L-aspartate + ATP = (2S)-2-[5-amino-1-(5-phospho-beta-D-ribosyl)imidazole-4-carboxamido]succinate + ADP + phosphate + 2 H(+). It participates in purine metabolism; IMP biosynthesis via de novo pathway; 5-amino-1-(5-phospho-D-ribosyl)imidazole-4-carboxamide from 5-amino-1-(5-phospho-D-ribosyl)imidazole-4-carboxylate: step 1/2. The sequence is that of Phosphoribosylaminoimidazole-succinocarboxamide synthase from Streptococcus pneumoniae (strain ATCC 700669 / Spain 23F-1).